The primary structure comprises 215 residues: MEKYQSDFIQLAIKHQALCFGEFVLKSGRTSPYFFNAGRFQTGSALAELGRHYAAAITAAGVDFDVVFGPAYKGIPLAAATAIALADEFGRDLPYCYNRKEAKDHGEGGTLVGAPLKGRILIVDDVITAGTAVREVMGIIQQAGAQPAAVLIGLNRQEKGRGELSAIQEVEQNFGVPVISIINLNHIIHYLEHQPGQAALVDRIKSYRATYGVEL.

Position 26 (Lys-26) interacts with 5-phospho-alpha-D-ribose 1-diphosphate. 34 to 35 (FF) contacts orotate. 5-phospho-alpha-D-ribose 1-diphosphate is bound by residues 72–73 (YK), Arg-99, Lys-100, Lys-103, His-105, and 124–132 (DDVITAGTA). Orotate contacts are provided by Thr-128 and Arg-156.

Belongs to the purine/pyrimidine phosphoribosyltransferase family. PyrE subfamily. Homodimer. The cofactor is Mg(2+).

The enzyme catalyses orotidine 5'-phosphate + diphosphate = orotate + 5-phospho-alpha-D-ribose 1-diphosphate. The protein operates within pyrimidine metabolism; UMP biosynthesis via de novo pathway; UMP from orotate: step 1/2. In terms of biological role, catalyzes the transfer of a ribosyl phosphate group from 5-phosphoribose 1-diphosphate to orotate, leading to the formation of orotidine monophosphate (OMP). The polypeptide is Orotate phosphoribosyltransferase (Cellvibrio japonicus (strain Ueda107) (Pseudomonas fluorescens subsp. cellulosa)).